The following is a 1333-amino-acid chain: DNA-directed RNA polymerase subunit beta' (1333 aa).

The Zn(2+) site is built by Cys60, Cys62, Cys75, and Cys78. 3 residues coordinate Mg(2+): Asp535, Asp537, and Asp539. Zn(2+)-binding residues include Cys901, Cys983, Cys990, and Cys993.

The protein belongs to the RNA polymerase beta' chain family. As to quaternary structure, the RNAP catalytic core consists of 2 alpha, 1 beta, 1 beta' and 1 omega subunit. When a sigma factor is associated with the core the holoenzyme is formed, which can initiate transcription. It depends on Mg(2+) as a cofactor. Zn(2+) serves as cofactor.

The catalysed reaction is RNA(n) + a ribonucleoside 5'-triphosphate = RNA(n+1) + diphosphate. In terms of biological role, DNA-dependent RNA polymerase catalyzes the transcription of DNA into RNA using the four ribonucleoside triphosphates as substrates. This Corynebacterium glutamicum (strain ATCC 13032 / DSM 20300 / JCM 1318 / BCRC 11384 / CCUG 27702 / LMG 3730 / NBRC 12168 / NCIMB 10025 / NRRL B-2784 / 534) protein is DNA-directed RNA polymerase subunit beta'.